Reading from the N-terminus, the 265-residue chain is Apolipoprotein A-I (265 aa).

The N-terminal stretch at 1–18 is a signal peptide; the sequence is MKAVVLTLAVLFLTGSQA. 2 consecutive repeat copies span residues 67-88 and 89-110. Residues 67–265 form a 10 X approximate tandem repeats region; that stretch reads LKLLDNWDSL…DEASKKLNAQ (199 aa). Met109 is subject to Methionine sulfoxide. A 3; half-length repeat occupies 111–121; it reads KDLQEVKQKVQ. Repeat copies occupy residues 122 to 142, 144 to 165, 166 to 187, 188 to 209, and 210 to 230. The stretch at 231-241 is one 9; half-length repeat; sequence PALEDLRQGLL. Repeat 10 spans residues 242-265; it reads PVLENLKVSILAAIDEASKKLNAQ.

Belongs to the apolipoprotein A1/A4/E family. Homodimer. Interacts with APOA1BP and CLU. Component of a sperm activating protein complex (SPAP), consisting of APOA1, an immunoglobulin heavy chain, an immunoglobulin light chain and albumin. Interacts with NDRG1. Interacts with SCGB3A2. Interacts with NAXE and YJEFN3. In terms of processing, glycosylated. Post-translationally, palmitoylated. Phosphorylation sites are present in the extracellular medium. Major protein of plasma HDL, also found in chylomicrons.

The protein localises to the secreted. Its function is as follows. Participates in the reverse transport of cholesterol from tissues to the liver for excretion by promoting cholesterol efflux from tissues and by acting as a cofactor for the lecithin cholesterol acyltransferase (LCAT). As part of the SPAP complex, activates spermatozoa motility. The polypeptide is Apolipoprotein A-I (APOA1) (Balaenoptera acutorostrata scammoni (North Pacific minke whale)).